A 563-amino-acid polypeptide reads, in one-letter code: Arginine--tRNA ligase (563 aa).

The 'HIGH' region signature appears at 120–130 (PNIAKPFHIGH).

This sequence belongs to the class-I aminoacyl-tRNA synthetase family. Monomer.

The protein localises to the cytoplasm. It carries out the reaction tRNA(Arg) + L-arginine + ATP = L-arginyl-tRNA(Arg) + AMP + diphosphate. The protein is Arginine--tRNA ligase of Clostridium botulinum (strain 657 / Type Ba4).